Consider the following 265-residue polypeptide: MASSRDRAYVTVYSPTLLTWVYDYYVLGFNLRYIWGCPTDAVLLPFFAENFSRRHLDVGVATGYLPARVLASPWRRAAAHRQHLTLLDINANSLRASDARVRAAAPGIETTCVEADVVADLPPVLASVVEEERARVEKAGGEAGSSSRSCLYDSISMFNLFHCVPGGPAKLRAISTYKALLADHGVLSGCTVLGERHATGWFSRWYLRLYNRKGIFNNINDTREEFEEVLNKEFEEVDTWMFGMVLLFRASKPRREGSGYVDLLA.

This sequence belongs to the methyltransferase superfamily.

The catalysed reaction is desmethylnectriapyrone + S-adenosyl-L-methionine = nectriapyrone + S-adenosyl-L-homocysteine + H(+). Its function is as follows. O-methyltransferase; part of the gene cluster that mediates the biosynthesis of nectriapyrone and its analogs phomopyrone A, acropyrone and zaepyrone. The nectriapyrone biosynthetic gene cluster consists of two genes, the highly reducing polyketide synthase NEC1 that produces a demethylated analog of nectriapyrone from one unit of acetyl-CoA and one unit of malonyl-CoA; and the O-methyltransferase NEC2 that further methylates the NEC1 product to yield nectriapyrone. Nectriapyrone is further hydrolyzed to nectriapyrone D, also known as gulypyrone B, by an unidentified hydrolase localized outside the nectriapyrone cluster. The sequence is that of O-methyltransferase NEC2 from Pyricularia oryzae (strain 70-15 / ATCC MYA-4617 / FGSC 8958) (Rice blast fungus).